A 276-amino-acid polypeptide reads, in one-letter code: Anamorsin homolog (276 aa).

The tract at residues 1–152 (MEPYVVDNLN…TRGSSIKLPW (152 aa)) is N-terminal SAM-like domain. The interval 152–189 (WAHSDIEAAWENVDNETSYDVDKNLINTNSLLQKSDYV) is linker. Positions 195, 211, 214, and 216 each coordinate [2Fe-2S] cluster. A fe-S binding site A region spans residues 195–216 (CGQEFAKNSIGKRKRACKNCTC). Residues Cys-237, Cys-240, Cys-248, and Cys-251 each coordinate [4Fe-4S] cluster. 2 consecutive short sequence motifs (cx2C motif) follow at residues 237-240 (CGNC) and 248-251 (CSTC). Positions 237–251 (CGNCYLGDAFRCSTC) are fe-S binding site B.

The protein belongs to the anamorsin family. As to quaternary structure, monomer. [2Fe-2S] cluster is required as a cofactor. [4Fe-4S] cluster serves as cofactor.

The protein localises to the cytoplasm. The protein resides in the mitochondrion intermembrane space. Component of the cytosolic iron-sulfur (Fe-S) protein assembly (CIA) machinery. Required for the maturation of extramitochondrial Fe-S proteins. Part of an electron transfer chain functioning in an early step of cytosolic Fe-S biogenesis, facilitating the de novo assembly of a [4Fe-4S] cluster on the cytosolic Fe-S scaffold complex. Electrons are transferred from NADPH via a FAD- and FMN-containing diflavin oxidoreductase. Together with the diflavin oxidoreductase, also required for the assembly of the diferric tyrosyl radical cofactor of ribonucleotide reductase (RNR), probably by providing electrons for reduction during radical cofactor maturation in the catalytic small subunit. The sequence is that of Anamorsin homolog from Schistosoma japonicum (Blood fluke).